Consider the following 274-residue polypeptide: Ribonucleoside-diphosphate reductase small chain (274 aa).

Fe cation is bound by residues aspartate 70, glutamate 101, and histidine 104. Residue tyrosine 108 is part of the active site. Fe cation-binding residues include glutamate 163, glutamate 197, and histidine 200.

This sequence belongs to the ribonucleoside diphosphate reductase small chain family. Heterodimer of a large and a small chain. The cofactor is Fe cation.

The enzyme catalyses a 2'-deoxyribonucleoside 5'-diphosphate + [thioredoxin]-disulfide + H2O = a ribonucleoside 5'-diphosphate + [thioredoxin]-dithiol. Its function is as follows. Ribonucleoside-diphosphate reductase holoenzyme provides the precursors necessary for viral DNA synthesis. Allows virus growth in non-dividing cells. Catalyzes the biosynthesis of deoxyribonucleotides from the corresponding ribonucleotides. This is Ribonucleoside-diphosphate reductase small chain from Sus scrofa (Pig).